The chain runs to 783 residues: uncharacterized protein (783 aa).

The zn(2)-C6 fungal-type DNA-binding region spans 40–66 (CFNCKARKVRCDGANPCKACASNNLEC).

The protein resides in the cytoplasm. It is found in the nucleus. This is an uncharacterized protein from Schizosaccharomyces pombe (strain 972 / ATCC 24843) (Fission yeast).